The primary structure comprises 206 residues: 2,3-bisphosphoglycerate-dependent phosphoglycerate mutase (206 aa).

Substrate is bound by residues 9 to 16 (RHGQSEWN), 22 to 23 (TG), R61, 88 to 91 (ERDY), K99, 115 to 116 (RR), and 159 to 160 (GN). H10 acts as the Tele-phosphohistidine intermediate in catalysis. E88 acts as the Proton donor/acceptor in catalysis.

The protein belongs to the phosphoglycerate mutase family. BPG-dependent PGAM subfamily. As to quaternary structure, homodimer.

The enzyme catalyses (2R)-2-phosphoglycerate = (2R)-3-phosphoglycerate. The protein operates within carbohydrate degradation; glycolysis; pyruvate from D-glyceraldehyde 3-phosphate: step 3/5. Its function is as follows. Catalyzes the interconversion of 2-phosphoglycerate and 3-phosphoglycerate. In Chelativorans sp. (strain BNC1), this protein is 2,3-bisphosphoglycerate-dependent phosphoglycerate mutase.